Reading from the N-terminus, the 241-residue chain is Endo-chitosanase B (241 aa).

The first 17 residues, 1–17 (MRLSEILAVALVTGATA), serve as a signal peptide directing secretion. Residue N86 is glycosylated (N-linked (GlcNAc...) asparagine).

The protein belongs to the glycosyl hydrolase 75 family.

Its subcellular location is the secreted. The enzyme catalyses Endohydrolysis of beta-(1-&gt;4)-linkages between D-glucosamine residues in a partly acetylated chitosan.. Its function is as follows. Chitosanase catalyzing the endo-type cleavage of chitosan, the deacylated form of chitin. Chitosanase may be crucial in the degradation of the deacetylated portion of chitin in the fungal cell wall. Chitoolisaccharides produced by the hydrolysis of partially N-acetylated chitosan are known to have many biological activities, including antibacterial activity, immune-enhancing effects, and elicitor activity. In Aspergillus oryzae (strain ATCC 42149 / RIB 40) (Yellow koji mold), this protein is Endo-chitosanase B (csnB).